A 265-amino-acid polypeptide reads, in one-letter code: Zinc transporter ZupT (265 aa).

The next 8 helical transmembrane spans lie at 6–26 (IAFAFSLVLLSGLSTSIGGAL), 37–57 (FMAAALGLSAGVMLYVSFMEI), 77–97 (WTMMGAFFAGIAIITIIDRLV), 122–142 (GMFTAFALAIHNFPEGFATFL), 150–170 (IAIPVAVAIAIHNIPEGIAVA), 184–204 (FWWATLSGLAEPLGALIGFAL), 208–228 (FIGPMTFGISFAVIAGIMVFI), and 245–265 (CAIYGLIAGMAVMAVSLALFI). Fe(2+) contacts are provided by asparagine 133 and glutamate 136. Zn(2+)-binding residues include glutamate 136 and histidine 161. The Fe(2+) site is built by asparagine 162, glutamate 165, and glutamate 194. Glutamate 165 serves as a coordination point for Zn(2+).

This sequence belongs to the ZIP transporter (TC 2.A.5) family. ZupT subfamily.

It is found in the cell membrane. The enzyme catalyses Zn(2+)(in) = Zn(2+)(out). Functionally, mediates zinc uptake. May also transport other divalent cations. The chain is Zinc transporter ZupT from Corynebacterium aurimucosum (strain ATCC 700975 / DSM 44827 / CIP 107346 / CN-1) (Corynebacterium nigricans).